A 150-amino-acid chain; its full sequence is UPF0179 protein Mbur_1033 (150 aa).

The protein belongs to the UPF0179 family.

The sequence is that of UPF0179 protein Mbur_1033 from Methanococcoides burtonii (strain DSM 6242 / NBRC 107633 / OCM 468 / ACE-M).